Reading from the N-terminus, the 152-residue chain is Arginine repressor (152 aa).

The protein belongs to the ArgR family.

It localises to the cytoplasm. It functions in the pathway amino-acid biosynthesis; L-arginine biosynthesis [regulation]. Regulates arginine biosynthesis genes. This chain is Arginine repressor, found in Caldicellulosiruptor saccharolyticus (strain ATCC 43494 / DSM 8903 / Tp8T 6331).